Here is a 123-residue protein sequence, read N- to C-terminus: Ribulose bisphosphate carboxylase small subunit, chloroplastic 1 (123 aa).

Methionine 1 carries the methionine derivative modification.

The protein belongs to the RuBisCO small chain family. Heterohexadecamer of 8 large and 8 small subunits.

The protein localises to the plastid. It is found in the chloroplast. Its function is as follows. RuBisCO catalyzes two reactions: the carboxylation of D-ribulose 1,5-bisphosphate, the primary event in carbon dioxide fixation, as well as the oxidative fragmentation of the pentose substrate. Both reactions occur simultaneously and in competition at the same active site. Although the small subunit is not catalytic it is essential for maximal activity. This Spinacia oleracea (Spinach) protein is Ribulose bisphosphate carboxylase small subunit, chloroplastic 1.